The chain runs to 1454 residues: Serine/threonine-protein kinase VPS15 (1454 aa).

A lipid anchor (N-myristoyl glycine) is attached at Gly-2. The 274-residue stretch at 27–300 (VHYVSQLNSS…LLNKYRGIFF (274 aa)) folds into the Protein kinase domain. ATP-binding positions include 33–41 (LNSSRFLKT) and Lys-54. Asp-147 (proton acceptor) is an active-site residue. 4 HEAT repeats span residues 460–497 (NKID…SVRK), 576–613 (KLIQ…FFGR), 615–652 (RTND…LLGT), and 654–691 (TLEQ…TGLI). WD repeat units follow at residues 1078–1118 (NEPN…VGEV), 1126–1165 (DCSS…QESE), 1229–1268 (PRHG…LIRS), 1275–1315 (APIT…CQYA), 1344–1382 (RSLN…SSKA), and 1422–1454 (YHHD…GIFQ).

It belongs to the protein kinase superfamily. Ser/Thr protein kinase family. In terms of assembly, component of the autophagy-specific VPS34 PI3-kinase complex I composed of VPS15, VPS30, VPS34, ATG14 and ATG38; and of the VPS34 PI3-kinase complex II composed of VPS15, VPS30, VPS34 and VPS38. Interacts directly with ATG14 and GPA1. Interacts directly with VPS34. In terms of processing, autophosphorylated.

The protein localises to the golgi apparatus. Its subcellular location is the trans-Golgi network membrane. It is found in the endosome membrane. It catalyses the reaction L-seryl-[protein] + ATP = O-phospho-L-seryl-[protein] + ADP + H(+). The enzyme catalyses L-threonyl-[protein] + ATP = O-phospho-L-threonyl-[protein] + ADP + H(+). Serine/threonine-protein kinase required for cytoplasm to vacuole transport (Cvt) and autophagy as a part of the autophagy-specific VPS34 PI3-kinase complex I. This complex is essential to recruit the ATG8-phosphatidylinositol conjugate and the ATG12-ATG5 conjugate to the pre-autophagosomal structure. Is also involved in endosome-to-Golgi retrograde transport as part of the VPS34 PI3-kinase complex II. This second complex is required for the endosome-to-Golgi retrieval of PEP1 and KEX2, and the recruitment of VPS5 and VPS7, two components of the retromer complex, to endosomal membranes (probably through the synthesis of a specific pool of phosphatidylinositol 3-phosphate recruiting the retromer to the endosomes). By regulating VPS34 kinase activity, VPS15 appears to be essential for the efficient delivery of soluble hydrolases to the yeast vacuole. May function as a G protein beta subunit to propagate the pheromone response at the endosome with GPA1. This Saccharomyces cerevisiae (strain ATCC 204508 / S288c) (Baker's yeast) protein is Serine/threonine-protein kinase VPS15.